The sequence spans 298 residues: Oxidoreductase YdhF (298 aa).

The active-site Proton donor is tyrosine 55. NADP(+) contacts are provided by residues 158 to 159 (SN), 209 to 220 (WSCLGGGRLFND), and 263 to 264 (SG).

Belongs to the aldo/keto reductase family. Aldo/keto reductase 2 subfamily.

May function as oxidoreductase. The sequence is that of Oxidoreductase YdhF (ydhF) from Escherichia coli (strain K12).